Reading from the N-terminus, the 128-residue chain is Glycine cleavage system H protein (128 aa).

In terms of domain architecture, Lipoyl-binding spans 24–106 (SVTVGITAHA…YGDGWFFKIK (83 aa)). An N6-lipoyllysine modification is found at Lys65.

This sequence belongs to the GcvH family. In terms of assembly, the glycine cleavage system is composed of four proteins: P, T, L and H. (R)-lipoate is required as a cofactor.

Functionally, the glycine cleavage system catalyzes the degradation of glycine. The H protein shuttles the methylamine group of glycine from the P protein to the T protein. This chain is Glycine cleavage system H protein, found in Chromobacterium violaceum (strain ATCC 12472 / DSM 30191 / JCM 1249 / CCUG 213 / NBRC 12614 / NCIMB 9131 / NCTC 9757 / MK).